Reading from the N-terminus, the 97-residue chain is Co-chaperonin GroES (97 aa).

The protein belongs to the GroES chaperonin family. Heptamer of 7 subunits arranged in a ring. Interacts with the chaperonin GroEL.

The protein localises to the cytoplasm. Its function is as follows. Together with the chaperonin GroEL, plays an essential role in assisting protein folding. The GroEL-GroES system forms a nano-cage that allows encapsulation of the non-native substrate proteins and provides a physical environment optimized to promote and accelerate protein folding. GroES binds to the apical surface of the GroEL ring, thereby capping the opening of the GroEL channel. The polypeptide is Co-chaperonin GroES (Bifidobacterium longum (strain NCC 2705)).